Consider the following 493-residue polypeptide: MAENLVNTFVTQVIENSDYEELDRIYLTNKVFTLVGEGVADIETDSSELIDLKDQLLQAGVKAGSVGELKEEQDIIGAQLMDLITPRPSVVNRNFWDTYKSNPEQAIADFYAQSKRNDYVKVKAIAQNIAYKAPTKYGDLEITINLSKPEKDPKAIAAAKNAVASDYPKCQLCMENEGYLGRINHPARSNHRVVRFQMEDKEWGFQYSPYAYFNEHSIFFYGKHEPMHISPLTFGRLLTIVEVFPGYFAGSNADLPIVGGSILTHEHYQGGRHTFPMEVAGIKEKVSFDGYSDVEAGIVNWPMSVLRLRSEDKGRLIALATKILNCWRGYSDEKAGVLAESDGQPHHTITPIARRKDGKFELDLVLRDNQTSEEYPDGIYHPHKDVQHIKKENIGLIEVMGLAILPPRLKTELKDVEDYLLGQGNQVAPIHQEWADELKAQNPNITAEEVTEVVRQSVADIFARVLEDAGVYKTNSEGLAQFKAFVDFVNLAD.

This sequence belongs to the galactose-1-phosphate uridylyltransferase type 2 family.

It is found in the cytoplasm. The catalysed reaction is alpha-D-galactose 1-phosphate + UDP-alpha-D-glucose = alpha-D-glucose 1-phosphate + UDP-alpha-D-galactose. The protein operates within carbohydrate metabolism; galactose metabolism. This is Galactose-1-phosphate uridylyltransferase (galT) from Streptococcus thermophilus.